Reading from the N-terminus, the 141-residue chain is MTKTAKVSDIVRDWVVLDAKDKVFGRLITEIAVLLRGKHRPFYTPNVDCGDFVVVINANKVKFSGMKLEDKEYFTHSGYFGSTKSKTLQEMLEKTPEKLYHLAVRGMLPKTKLGKAMIKKLKVYRDDKHPHTAQTSKKDAK.

Belongs to the universal ribosomal protein uL13 family. In terms of assembly, part of the 50S ribosomal subunit.

This protein is one of the early assembly proteins of the 50S ribosomal subunit, although it is not seen to bind rRNA by itself. It is important during the early stages of 50S assembly. This chain is Large ribosomal subunit protein uL13, found in Helicobacter acinonychis (strain Sheeba).